The primary structure comprises 202 residues: Arenicin-1 (202 aa).

The first 25 residues, 1-25, serve as a signal peptide directing secretion; that stretch reads MTSTQSVAVCATLILAIFCVNDIHC. A propeptide spanning residues 26 to 181 is cleaved from the precursor; sequence DPIAEARAAA…SGDNNEPEKR (156 aa). One can recognise a BRICHOS domain in the interval 73–168; that stretch reads GDGVEGSVMV…ACQGKSVYWL (96 aa). Disulfide bonds link cysteine 100–cysteine 160 and cysteine 184–cysteine 201.

Has antimicrobial activity against the Gram-negative bacteria E.coli and P.mirabilis, the Gram-positive bacterium L.monocytogenes and the yeast C.albicans. The protein is Arenicin-1 of Arenicola marina (Lugworm).